A 233-amino-acid chain; its full sequence is Outer membrane protein MIP (233 aa).

An N-terminal signal peptide occupies residues 1 to 20 (MKMKLVTAAIMGLAMSTAMA). The region spanning 144–233 (SDTVTVEYTG…IHLISVKKAA (90 aa)) is the PPIase FKBP-type domain.

This sequence belongs to the FKBP-type PPIase family.

The protein localises to the cell outer membrane. It carries out the reaction [protein]-peptidylproline (omega=180) = [protein]-peptidylproline (omega=0). With respect to regulation, strongly inhibited by FK506 but is completely resistant to cyclosporin A. Functionally, essential virulence factor associated with macrophage infectivity. Exhibits PPIase activity. The polypeptide is Outer membrane protein MIP (mip) (Legionella longbeachae).